Reading from the N-terminus, the 85-residue chain is uncharacterized protein (85 aa).

The protein belongs to the ycf76 family.

It localises to the plastid. The protein localises to the chloroplast. This is an uncharacterized protein from Saccharum hybrid (Sugarcane).